We begin with the raw amino-acid sequence, 376 residues long: Putative aryl-alcohol dehydrogenase AAD14 (376 aa).

Tyrosine 76 acts as the Proton donor in catalysis. Histidine 151 contributes to the substrate binding site. Residue 236-246 coordinates NADP(+); the sequence is DVMGGGRFQSK.

It belongs to the aldo/keto reductase family. Aldo/keto reductase 2 subfamily.

The chain is Putative aryl-alcohol dehydrogenase AAD14 (AAD14) from Saccharomyces cerevisiae (strain ATCC 204508 / S288c) (Baker's yeast).